The primary structure comprises 461 residues: Chromosomal replication initiator protein DnaA (461 aa).

A domain I, interacts with DnaA modulators region spans residues 1 to 83; the sequence is MTASLWQQCL…LHFAVGRRPT (83 aa). The segment at 83 to 124 is domain II; it reads TAATVQMNTAAAPVADVRIGPAITVPSWTSKQDAMPEINHKS. Residues 125–341 are domain III, AAA+ region; sequence NINETYTFEN…GALNRVIANA (217 aa). ATP contacts are provided by glycine 169, glycine 171, lysine 172, and threonine 173. The domain IV, binds dsDNA stretch occupies residues 342 to 461; the sequence is RFTGKPINID…YSNLIRTLSS (120 aa).

It belongs to the DnaA family. As to quaternary structure, oligomerizes as a right-handed, spiral filament on DNA at oriC.

It localises to the cytoplasm. Its function is as follows. Plays an essential role in the initiation and regulation of chromosomal replication. ATP-DnaA binds to the origin of replication (oriC) to initiate formation of the DNA replication initiation complex once per cell cycle. Binds the DnaA box (a 9 base pair repeat at the origin) and separates the double-stranded (ds)DNA. Forms a right-handed helical filament on oriC DNA; dsDNA binds to the exterior of the filament while single-stranded (ss)DNA is stabiized in the filament's interior. The ATP-DnaA-oriC complex binds and stabilizes one strand of the AT-rich DNA unwinding element (DUE), permitting loading of DNA polymerase. After initiation quickly degrades to an ADP-DnaA complex that is not apt for DNA replication. Binds acidic phospholipids. The chain is Chromosomal replication initiator protein DnaA from Tolumonas auensis (strain DSM 9187 / NBRC 110442 / TA 4).